We begin with the raw amino-acid sequence, 157 residues long: Probable succinate transporter subunit YjjB (157 aa).

Transmembrane regions (helical) follow at residues 8–28, 50–70, 87–107, and 129–149; these read LALA…AMVF, MILM…SMLV, VFTV…TAMI, and FLTA…PGLW.

The protein belongs to the ThrE exporter (TC 2.A.79) family. As to quaternary structure, the transporter is composed of YjjB and YjjP.

Its subcellular location is the cell inner membrane. In terms of biological role, involved in succinate export with YjjP. Both proteins are required for export. The polypeptide is Probable succinate transporter subunit YjjB (Escherichia coli O127:H6 (strain E2348/69 / EPEC)).